Here is a 113-residue protein sequence, read N- to C-terminus: MTDISVPLTFTDAAANKVKSLITDEENPNLKLRVYITGGGCSGFQYGFTFDEKVNEGDLTVENAGVQLVIDPMSLQYLIGGTVDYTEGLEGSRFVVQNPNASSTCGCGSSFSI.

Residues Cys41, Cys105, and Cys107 each contribute to the iron-sulfur cluster site.

Belongs to the HesB/IscA family. Homodimer. Requires iron-sulfur cluster as cofactor.

Functionally, required for insertion of 4Fe-4S clusters for at least IspG. This is Iron-sulfur cluster insertion protein ErpA from Actinobacillus succinogenes (strain ATCC 55618 / DSM 22257 / CCUG 43843 / 130Z).